The sequence spans 540 residues: Isocitrate lyase (540 aa).

103–105 serves as a coordination point for substrate; that stretch reads SGW. Mg(2+) is bound at residue Asp187. Cys225 serves as the catalytic Proton acceptor. Substrate-binding positions include 226-227, 385-389, and Thr458; these read GH and NNSPS.

Belongs to the isocitrate lyase/PEP mutase superfamily. Isocitrate lyase family. In terms of assembly, homotetramer. The cofactor is Mg(2+).

It catalyses the reaction D-threo-isocitrate = glyoxylate + succinate. Its pathway is carbohydrate metabolism; glyoxylate cycle; (S)-malate from isocitrate: step 1/2. It functions in the pathway one-carbon metabolism; formaldehyde assimilation via serine pathway. In the presence of magnesium, inhibited by oxalate, potassium cyanide, manganese, silver, cadmium and to a lesser extent by succinate, glycolate, iodoacetamide, DL-penicillamine, aluminum, sodium, potassium, lithium and strontium. Its function is as follows. Involved in the metabolic adaptation in response to environmental changes. Catalyzes the reversible formation of succinate and glyoxylate from isocitrate, a key step of the glyoxylate cycle, which operates as an anaplerotic route for replenishing the tricarboxylic acid cycle during growth on fatty acid substrates. May be involved in the assimilation of one-carbon compounds via the isocitrate lyase-positive serine pathway. In Hyphomicrobium methylovorum, this protein is Isocitrate lyase.